We begin with the raw amino-acid sequence, 417 residues long: Gamma-glutamyl phosphate reductase (417 aa).

Belongs to the gamma-glutamyl phosphate reductase family.

The protein resides in the cytoplasm. The enzyme catalyses L-glutamate 5-semialdehyde + phosphate + NADP(+) = L-glutamyl 5-phosphate + NADPH + H(+). Its pathway is amino-acid biosynthesis; L-proline biosynthesis; L-glutamate 5-semialdehyde from L-glutamate: step 2/2. Its function is as follows. Catalyzes the NADPH-dependent reduction of L-glutamate 5-phosphate into L-glutamate 5-semialdehyde and phosphate. The product spontaneously undergoes cyclization to form 1-pyrroline-5-carboxylate. The sequence is that of Gamma-glutamyl phosphate reductase from Escherichia coli O17:K52:H18 (strain UMN026 / ExPEC).